We begin with the raw amino-acid sequence, 1001 residues long: MNNAKVRIYDLSKELNLENRDILDICERLNVAAKSHSSTISESDAERIKAAAEKFTPQQPKKPRVASRPESKEDKSDPKQQKILAIHHKQEKSGGPSPARPTPPPRPKLQAPKAPTPPQPPVAKASAPKIQKQEEPAQEAPKSVAPPTQPLAPPPVPSLQSPPSKPAPPTPPAKKAAPAPRLAGPPGRTASPNKTAVPAPAKPKVNRPEIVSLKDNRGQARSPGDREEKVAIAAPEPPKPKVELRRPKPPRPEEDENLPELLEFPPLSRGKGVDGDNDADDGDLLSTEKPKPKLKRPTPPRLGKPDQWEDDEDEKANKAKAANKGKRRPKMDDDDDDLDIDGDNGPKPTLVSLSIARPPKPKSLAAKPSTPTVAKVKKPTLKSEAGSSAGGSSRSRGDRRDRKEVVQKPEVIMLDRSLTVRDLADLLKISETDIIKRLFLKGVAVQITQTLDEETARMVAESFEVAVETPERVAAAAKTTEMLDEADLDNLVRRPPVVTIMGHVDHGKTTLLDSIRKTKVAQGEAGGITQHIGAYHVEVEHNDKTEQIVFLDTPGHEAFTAMRARGAKVTDIAILVVAADDGVQPQTKEAISHAKAAGVPLIVAINKVDKPEANPDRIKQELSELGLLAEEWGGDTIMVPVSALNGDNLDGLLEMILLVSEVEELVANPNRQAKGTVIEANLDRTRGPVATLLIQNGTLRVGDAIVVGAVYGKIRAMIDDRGDKVEEASPSFAVEILGLGDVPAAGDEFEVFTNEKDARLQAEARAMEDRQTRLQQAMSSRKVTLSSISAQAQEGELKELNIILKADVQGSLGAILGSLEQLPQGEVQIRVLLASPGEVTETDVDLAAASGAIIIGFNTTLASGARQAADQEGVDIREYDIIYKLLDDIQGAMEGLLDPEEIESSLGTAEVRAVFPVGRGNIAGCYVQSGKIIRNRNLRVRRGDQVLFEGNIDSLKRIKEDVREVNAGYECGIGCSKFNDWKEGDIIEAYEMTMKRRTLAT.

The segment at 34-404 (KSHSSTISES…SRGDRRDRKE (371 aa)) is disordered. Residues 67–80 (SRPESKEDKSDPKQ) are compositionally biased toward basic and acidic residues. Pro residues-rich tracts occupy residues 98–107 (PARPTPPPRP), 147–157 (PTQPLAPPPVP), and 163–172 (PSKPAPPTPP). The segment covering 173-190 (AKKAAPAPRLAGPPGRTA) has biased composition (low complexity). Basic and acidic residues-rich tracts occupy residues 212–230 (SLKD…EEKV) and 238–252 (PKPK…PPRP). A compositionally biased stretch (acidic residues) spans 332 to 342 (DDDDDDLDIDG). Composition is skewed to low complexity over residues 362 to 371 (KSLAAKPSTP) and 385 to 394 (AGSSAGGSSR). Over residues 395 to 404 (SRGDRRDRKE) the composition is skewed to basic and acidic residues. The 174-residue stretch at 493–666 (RRPPVVTIMG…LLVSEVEELV (174 aa)) folds into the tr-type G domain. A G1 region spans residues 502 to 509 (GHVDHGKT). 502–509 (GHVDHGKT) contributes to the GTP binding site. The segment at 527–531 (GITQH) is G2. The segment at 552–555 (DTPG) is G3. Residues 552–556 (DTPGH) and 606–609 (NKVD) each bind GTP. The segment at 606-609 (NKVD) is G4. Residues 642–644 (SAL) are G5.

Belongs to the TRAFAC class translation factor GTPase superfamily. Classic translation factor GTPase family. IF-2 subfamily.

The protein resides in the cytoplasm. In terms of biological role, one of the essential components for the initiation of protein synthesis. Protects formylmethionyl-tRNA from spontaneous hydrolysis and promotes its binding to the 30S ribosomal subunits. Also involved in the hydrolysis of GTP during the formation of the 70S ribosomal complex. This Synechocystis sp. (strain ATCC 27184 / PCC 6803 / Kazusa) protein is Translation initiation factor IF-2 (infB).